Here is a 341-residue protein sequence, read N- to C-terminus: Ribosomal RNA small subunit methyltransferase H (341 aa).

Residues 47 to 49 (GGY), Asp64, Phe91, Asp109, and Gln116 each bind S-adenosyl-L-methionine.

This sequence belongs to the methyltransferase superfamily. RsmH family.

The protein resides in the cytoplasm. The catalysed reaction is cytidine(1402) in 16S rRNA + S-adenosyl-L-methionine = N(4)-methylcytidine(1402) in 16S rRNA + S-adenosyl-L-homocysteine + H(+). Specifically methylates the N4 position of cytidine in position 1402 (C1402) of 16S rRNA. This Agrobacterium fabrum (strain C58 / ATCC 33970) (Agrobacterium tumefaciens (strain C58)) protein is Ribosomal RNA small subunit methyltransferase H.